Consider the following 229-residue polypeptide: 7-cyano-7-deazaguanine synthase (229 aa).

Position 12-22 (Leu-12–Ala-22) interacts with ATP. Zn(2+)-binding residues include Cys-194, Cys-202, Cys-205, and Cys-208.

The protein belongs to the QueC family. It depends on Zn(2+) as a cofactor.

It carries out the reaction 7-carboxy-7-deazaguanine + NH4(+) + ATP = 7-cyano-7-deazaguanine + ADP + phosphate + H2O + H(+). It participates in purine metabolism; 7-cyano-7-deazaguanine biosynthesis. Functionally, catalyzes the ATP-dependent conversion of 7-carboxy-7-deazaguanine (CDG) to 7-cyano-7-deazaguanine (preQ(0)). The chain is 7-cyano-7-deazaguanine synthase from Acidobacterium capsulatum (strain ATCC 51196 / DSM 11244 / BCRC 80197 / JCM 7670 / NBRC 15755 / NCIMB 13165 / 161).